We begin with the raw amino-acid sequence, 535 residues long: GMP synthase [glutamine-hydrolyzing] (535 aa).

One can recognise a Glutamine amidotransferase type-1 domain in the interval 4–210 (KILILDFGSQ…VHEICHCKPD (207 aa)). Residue Cys-85 is the Nucleophile of the active site. Residues His-184 and Glu-186 contribute to the active site. A GMPS ATP-PPase domain is found at 211–403 (WVMGDYIAEA…LGLPREMVYR (193 aa)). 238-244 (SGGVDSS) lines the ATP pocket.

Homodimer.

The enzyme catalyses XMP + L-glutamine + ATP + H2O = GMP + L-glutamate + AMP + diphosphate + 2 H(+). Its pathway is purine metabolism; GMP biosynthesis; GMP from XMP (L-Gln route): step 1/1. In terms of biological role, catalyzes the synthesis of GMP from XMP. The polypeptide is GMP synthase [glutamine-hydrolyzing] (Polynucleobacter asymbioticus (strain DSM 18221 / CIP 109841 / QLW-P1DMWA-1) (Polynucleobacter necessarius subsp. asymbioticus)).